A 456-amino-acid chain; its full sequence is Chordin-like protein 1 (456 aa).

The first 27 residues, 1–27, serve as a signal peptide directing secretion; the sequence is MRKKWKMGGMKYIFSLLFFLLLEGGKT. VWFC domains are found at residues 35-100 and 113-179; these read TYCM…PRCP and KSCE…RVCR. A glycan (N-linked (GlcNAc...) asparagine) is linked at asparagine 118. The Cell attachment site motif lies at 179–181; that stretch reads RGD. Residues 202-223 form a disordered region; it reads ARHSYHRSHYDPPPSRQAGGLS. Positions 258–323 constitute a VWFC 3 domain; that stretch reads QVCVSNGKTY…IDGKCCKVCP (66 aa). Asparagine 291 is a glycosylation site (N-linked (GlcNAc...) asparagine).

Expressed in the developing cornea and in the eye anterior segment in addition to the retina. Differentially expressed in the fetal brain. There is high expression in cerebellum and neocortex. Expressed in retinal pericytes.

It localises to the secreted. In terms of biological role, antagonizes the function of BMP4 by binding to it and preventing its interaction with receptors. Alters the fate commitment of neural stem cells from gliogenesis to neurogenesis. Contributes to neuronal differentiation of neural stem cells in the brain by preventing the adoption of a glial fate. May play a crucial role in dorsoventral axis formation. May play a role in embryonic bone formation. May also play an important role in regulating retinal angiogenesis through modulation of BMP4 actions in endothelial cells. Plays a role during anterior segment eye development. The chain is Chordin-like protein 1 (CHRDL1) from Homo sapiens (Human).